The primary structure comprises 1248 residues: Kinesin-like protein KIN-14I (1248 aa).

Residues Phe88–Leu244 form the MyTH4 domain. Residues Leu249–Tyr563 form the FERM domain. A coiled-coil region spans residues Asn586–Glu659. Residues Glu675–Thr704 form a disordered region. A compositionally biased stretch (polar residues) spans Lys679–Ser693. A coiled-coil region spans residues Val708–Thr799. A Kinesin motor domain is found at Lys872–Ile1193. Gly953–Thr960 is an ATP binding site. Residues Val1201–Arg1223 are calmodulin-binding. Residues Ala1220–Ser1248 are disordered. Residues Glu1234 to Ser1248 show a composition bias toward basic and acidic residues.

Belongs to the TRAFAC class myosin-kinesin ATPase superfamily. Kinesin family. KIN-14 subfamily. Binds microtubules via its N-terminus containing the MyTH4 domain and binds F-actin via its FERM domain. Binding to calmodulin inhibits microtubule binding activity.

The protein resides in the cytoplasm. Its subcellular location is the cytoskeleton. Its function is as follows. Minus-end microtubule-dependent motor protein involved in the regulation of cell division. The sequence is that of Kinesin-like protein KIN-14I from Oryza sativa subsp. japonica (Rice).